A 350-amino-acid chain; its full sequence is Hydroxymethylglutaryl-CoA synthase (350 aa).

Catalysis depends on Glu-83, which acts as the Proton donor/acceptor. Residue Cys-115 is the Acyl-thioester intermediate of the active site. (3S)-3-hydroxy-3-methylglutaryl-CoA is bound by residues Cys-115 and Thr-156. Residue Arg-204 coordinates CoA. (3S)-3-hydroxy-3-methylglutaryl-CoA contacts are provided by Thr-206 and His-239. The active-site Proton donor/acceptor is His-239. CoA is bound at residue Lys-244. (3S)-3-hydroxy-3-methylglutaryl-CoA-binding residues include Asn-271 and Ser-301.

The protein belongs to the thiolase-like superfamily. Archaeal HMG-CoA synthase family. As to quaternary structure, interacts with acetoacetyl-CoA thiolase that catalyzes the precedent step in the pathway and with a DUF35 protein. The acetoacetyl-CoA thiolase/HMG-CoA synthase complex channels the intermediate via a fused CoA-binding site, which allows for efficient coupling of the endergonic thiolase reaction with the exergonic HMGCS reaction.

The catalysed reaction is acetoacetyl-CoA + acetyl-CoA + H2O = (3S)-3-hydroxy-3-methylglutaryl-CoA + CoA + H(+). It participates in metabolic intermediate biosynthesis; (R)-mevalonate biosynthesis; (R)-mevalonate from acetyl-CoA: step 2/3. Its function is as follows. Catalyzes the condensation of acetyl-CoA with acetoacetyl-CoA to form 3-hydroxy-3-methylglutaryl-CoA (HMG-CoA). Functions in the mevalonate (MVA) pathway leading to isopentenyl diphosphate (IPP), a key precursor for the biosynthesis of isoprenoid compounds that are building blocks of archaeal membrane lipids. This Pyrococcus furiosus (strain ATCC 43587 / DSM 3638 / JCM 8422 / Vc1) protein is Hydroxymethylglutaryl-CoA synthase.